We begin with the raw amino-acid sequence, 60 residues long: LTCCNQQSSQPKTTTDCADNSCYKKTWKDHRGTRIERGCGCPQVKPGIKLECCKTNECNN.

4 disulfides stabilise this stretch: cysteine 3-cysteine 22, cysteine 17-cysteine 39, cysteine 41-cysteine 52, and cysteine 53-cysteine 58.

Belongs to the three-finger toxin family. Short-chain subfamily. Type I alpha-neurotoxin sub-subfamily. Expressed by the venom gland.

The protein resides in the secreted. Functionally, binds to muscle nicotinic acetylcholine receptor (nAChR) and inhibit acetylcholine from binding to the receptor, thereby impairing neuromuscular transmission. The chain is Short neurotoxin C from Aipysurus laevis (Olive sea snake).